Here is a 124-residue protein sequence, read N- to C-terminus: Seripauperin-15 (124 aa).

The first 20 residues, 1 to 20 (MVKLTSIAAGVAAIAAGVAA), serve as a signal peptide directing secretion.

Belongs to the SRP1/TIP1 family. Seripauperin subfamily.

The chain is Seripauperin-15 (PAU15) from Saccharomyces cerevisiae (strain ATCC 204508 / S288c) (Baker's yeast).